Here is an 86-residue protein sequence, read N- to C-terminus: Small ribosomal subunit protein eS27 (86 aa).

A C4-type zinc finger spans residues 39–61; the sequence is CQGCFNITTVFSHSQTVVVCPGC.

The protein belongs to the eukaryotic ribosomal protein eS27 family. Zn(2+) serves as cofactor.

The sequence is that of Small ribosomal subunit protein eS27 (RPS27) from Hordeum vulgare (Barley).